A 101-amino-acid chain; its full sequence is Large ribosomal subunit protein uL23 (101 aa).

This sequence belongs to the universal ribosomal protein uL23 family. As to quaternary structure, part of the 50S ribosomal subunit. Contacts protein L29, and trigger factor when it is bound to the ribosome.

Its function is as follows. One of the early assembly proteins it binds 23S rRNA. One of the proteins that surrounds the polypeptide exit tunnel on the outside of the ribosome. Forms the main docking site for trigger factor binding to the ribosome. This Rhodococcus erythropolis (strain PR4 / NBRC 100887) protein is Large ribosomal subunit protein uL23.